A 418-amino-acid polypeptide reads, in one-letter code: Peptide chain release factor subunit 1 (418 aa).

Belongs to the eukaryotic release factor 1 family. Heterodimer of two subunits, one of which binds GTP.

The protein localises to the cytoplasm. Its function is as follows. Directs the termination of nascent peptide synthesis (translation) in response to the termination codons UAA, UAG and UGA. In Haloarcula marismortui (strain ATCC 43049 / DSM 3752 / JCM 8966 / VKM B-1809) (Halobacterium marismortui), this protein is Peptide chain release factor subunit 1.